The primary structure comprises 366 residues: uncharacterized protein (366 aa).

The next 6 membrane-spanning stretches (helical) occupy residues 164-184, 188-208, 223-243, 256-276, 299-319, and 325-345; these read IPLI…FADI, IVVG…RKLL, VFPI…IYSL, FIGE…LILM, FFCL…GEYL, and FIMF…LSVI.

The protein to A.fulgidus AF2058.

The protein localises to the cell membrane. This is an uncharacterized protein from Methanocaldococcus jannaschii (strain ATCC 43067 / DSM 2661 / JAL-1 / JCM 10045 / NBRC 100440) (Methanococcus jannaschii).